The sequence spans 292 residues: MERGPVVGAGLGAGARIQALLGCLLKVLLWVASALLYFGSEQAARLLGSPCLRRLYHAWLAAVVIFGPLLQFHVNPRTIFASHGNFFNIKFVNSAWGWTCTFLGGFVLLVVFLATRRVAVTARHLSRLVVGAAVWRGAGRAFLLIEDLTGSCFEPLPQGLLLHELPDRRSCLAAGHQWRGYTVSSHTFLLTFCCLLMAEEAAVFAKYLAHGLPAGAPLRLVFLLNVLLLGLWNFLLLCTVIYFHQYTHKVVGAAVGTFAWYLTYGSWYHQPWSPGSPGHGLFPRPHSSRKHN.

The Lumenal portion of the chain corresponds to 1 to 18 (MERGPVVGAGLGAGARIQ). A helical transmembrane segment spans residues 19 to 39 (ALLGCLLKVLLWVASALLYFG). Topologically, residues 40–54 (SEQAARLLGSPCLRR) are cytoplasmic. The chain crosses the membrane as a helical span at residues 55 to 75 (LYHAWLAAVVIFGPLLQFHVN). Residues 76–94 (PRTIFASHGNFFNIKFVNS) lie on the Lumenal side of the membrane. Residues 95-115 (AWGWTCTFLGGFVLLVVFLAT) traverse the membrane as a helical segment. Topologically, residues 116-141 (RRVAVTARHLSRLVVGAAVWRGAGRA) are cytoplasmic. The helical transmembrane segment at 142 to 162 (FLLIEDLTGSCFEPLPQGLLL) threads the bilayer. The Lumenal segment spans residues 163-187 (HELPDRRSCLAAGHQWRGYTVSSHT). The active site involves H186. Residues 188–208 (FLLTFCCLLMAEEAAVFAKYL) form a helical membrane-spanning segment. The Cytoplasmic segment spans residues 209-220 (AHGLPAGAPLRL). Residues 221-241 (VFLLNVLLLGLWNFLLLCTVI) form a helical membrane-spanning segment. Topologically, residues 242-249 (YFHQYTHK) are lumenal. Residue H244 is part of the active site. A helical membrane pass occupies residues 250-270 (VVGAAVGTFAWYLTYGSWYHQ). The Cytoplasmic segment spans residues 271–292 (PWSPGSPGHGLFPRPHSSRKHN).

The protein belongs to the FIT family. FIT1 subfamily. As to expression, primarily expressed in heart and skeletal muscle.

Its subcellular location is the endoplasmic reticulum membrane. Its function is as follows. Plays an important role in the formation of lipid droplets (LDs) which are storage organelles at the center of lipid and energy homeostasis. Directly binds to diacylglycerol (DAGs) and triacylglycerol. This Homo sapiens (Human) protein is Fat storage-inducing transmembrane protein 1.